The primary structure comprises 449 residues: Putative F-box/FBD/LRR-repeat protein At5g62970 (449 aa).

Residues 2–50 enclose the F-box domain; it reads DKISGFSDDELLVKILSFLPFKFAITTSVLSKQWKFLWMRVPKLEYDED. LRR repeat units follow at residues 27–52, 81–107, 158–185, 186–211, 252–279, and 328–354; these read TTSV…EDSM, GHRM…RLKF, TLKL…HLER, VTYG…VVEL, YFKL…NITA, and IHNA…EFDE. The FBD domain occupies 368–418; the sequence is FWNQPNSVPQCLLSTLQTFEWSGYPGSVQGKDLATYILRKSRQLKIATISI.

This chain is Putative F-box/FBD/LRR-repeat protein At5g62970, found in Arabidopsis thaliana (Mouse-ear cress).